The primary structure comprises 238 residues: Protein CPn_0658/CP_0089/CPj0658/CpB0684 (238 aa).

The protein belongs to the chlamydial CPn_0658/CT_538/TC_0825 family.

This Chlamydia pneumoniae (Chlamydophila pneumoniae) protein is Protein CPn_0658/CP_0089/CPj0658/CpB0684.